The chain runs to 229 residues: Flagellar L-ring protein 1 (229 aa).

The first 18 residues, 1-18, serve as a signal peptide directing secretion; that stretch reads MYLRKISAPLMTMLLLNG. Cys19 carries N-palmitoyl cysteine lipidation. Cys19 is lipidated: S-diacylglycerol cysteine.

This sequence belongs to the FlgH family. The basal body constitutes a major portion of the flagellar organelle and consists of four rings (L,P,S, and M) mounted on a central rod.

Its subcellular location is the cell outer membrane. It is found in the bacterial flagellum basal body. Functionally, assembles around the rod to form the L-ring and probably protects the motor/basal body from shearing forces during rotation. This chain is Flagellar L-ring protein 1 (flgH1), found in Yersinia pseudotuberculosis serotype I (strain IP32953).